A 404-amino-acid polypeptide reads, in one-letter code: Glucose-1-phosphate adenylyltransferase (404 aa).

Alpha-D-glucose 1-phosphate-binding positions include Y99, G164, 179–180, and S197; that span reads EK.

It belongs to the bacterial/plant glucose-1-phosphate adenylyltransferase family.

The enzyme catalyses alpha-D-glucose 1-phosphate + ATP + H(+) = ADP-alpha-D-glucose + diphosphate. Its pathway is capsule biogenesis; capsule polysaccharide biosynthesis. It functions in the pathway glycan biosynthesis; glycogen biosynthesis. Involved in the biosynthesis of ADP-glucose, a building block, required in the biosynthesis of maltose-1-phosphate (M1P) and in the elongation reactions to produce linear alpha-1,4-glucans. Catalyzes the reaction between ATP and alpha-D-glucose 1-phosphate (G1P) to produce pyrophosphate and ADP-Glc. This chain is Glucose-1-phosphate adenylyltransferase, found in Mycobacterium ulcerans (strain Agy99).